Here is a 369-residue protein sequence, read N- to C-terminus: Glycine oxidase (369 aa).

FAD is bound by residues 14–15 (II), 34–35 (ES), 42–43 (AT), 47–49 (AGM), and V174. Residues R302 and R329 each coordinate substrate. 327 to 333 (HFRNGIL) contacts FAD.

Belongs to the DAO family. ThiO subfamily. Homotetramer. FAD serves as cofactor.

It catalyses the reaction glycine + O2 + H2O = glyoxylate + H2O2 + NH4(+). It carries out the reaction glyphosate + O2 + H2O = aminomethylphosphonate + glyoxylate + H2O2 + H(+). The enzyme catalyses N-ethylglycine + O2 + H2O = ethylamine + glyoxylate + H2O2. The catalysed reaction is sarcosine + O2 + H2O = methylamine + glyoxylate + H2O2. It catalyses the reaction D-alanine + O2 + H2O = pyruvate + H2O2 + NH4(+). It participates in cofactor biosynthesis; thiamine diphosphate biosynthesis. In terms of biological role, catalyzes the FAD-dependent oxidative deamination of glycine, leading to glyoxylate, ammonia and hydrogen peroxide. Is also able to act on various amines and D-amino acids to yield the corresponding alpha-keto acids, ammonia/amine, and hydrogen peroxide. Can also oxidize the herbicide glyphosate (N-phosphonomethylglycine), and thus may be involved in the degradation pathway that allows B.licheniformis J33-8 to grow with glyphosate as the sole source of carbon. Is essential for thiamine biosynthesis since the oxidation of glycine catalyzed by ThiO generates the glycine imine intermediate (dehydroglycine) required for the biosynthesis of the thiazole ring of thiamine pyrophosphate. This Bacillus licheniformis protein is Glycine oxidase.